We begin with the raw amino-acid sequence, 881 residues long: MGKKIKKEVEPPPKDVFDPITIESKKAATVVLMLKSPEEDILAKACEAIYKFALKGEENKATLLELGAVEPLTKLLTHEDKTVRRNAMMIFGILASNSDVKKLLRELEVMNSVIAQLSPEEEVVIHEFASLCLANMSVEYTGKVQIFEHGGLEPLIRLLSSSDPDVKKNSIECIYNLVQDFQCRTTLQELNAIPPILELLRSEYPIIQLLALKTLGVITCDKEARTMLKENQGLDHLTKILETKELNDLHVEALSVIANCLEDMDTMVLMQQTGSLKKVLSFAESSTIPDIQKNAAKAIAKAAYDPENRKVFHEQEVEKCLVTLLGSDSDGTKIAASQAISALCENLSCKEFFNTQGIPQIVQLLRSDNEEVREAAALALANLTTSSPANANAAAEADAIDPLINILSSKRDGAIANAATVLTNMATQEPLRAIIQNHEIMHALLGPLHSTNTLVQSTAALTVAATACDVEARTQLRNCGGLVPLVGLLHSKNDEVRRHASWAVMVCAGDEPMAVELCRLGALNILEEINRSLSRKNKFSEAAYNKLLNNNLSLKYSQTGYLSSSNIISDGFYDYGRINPGTKLLSLKELCLQELNDQRAILLVNNKSDTSPPPSMEDKSSDVGYGRSISSSSSLRRGSKEKANAIFGSPTEEKSEPASVRNTILSRAFTKEKGVSKKKSRLQLICSSYLLWKGKGKKEEEKVKEEEEILALPKFTEGSPEKEWNPPPDPEFCVYVLEVTKSILPIVNLKEQIEVLAKYVADKMGGKIPKEKLADFSWELHISELKFQLKSNVVPIGYIKKGIFYHRALLFKALADKIGVGCSLVRGEYSRGWNEVKLVNEARKGMIGNLPPPEEYIVDLMFHPGNLLKLRSKEADLYRFL.

ARM repeat units lie at residues 15-54 (DVFDPITIESKKAATVVLMLKSPEEDILAKACEAIYKFAL), 57-96 (EENKATLLELGAVEPLTKLLTHEDKTVRRNAMMIFGILAS), 98-138 (SDVK…NMSV), 140-179 (YTGKVQIFEHGGLEPLIRLLSSSDPDVKKNSIECIYNLVQ), 181-220 (FQCRTTLQELNAIPPILELLRSEYPIIQLLALKTLGVITC), 222-262 (KEAR…NCLE), 264-304 (MDTM…KAAY), 306-345 (PENRKVFHEQEVEKCLVTLLGSDSDGTKIAASQAISALCE), 346-385 (NLSCKEFFNTQGIPQIVQLLRSDNEEVREAAALALANLTT), 388-427 (PANANAAAEADAIDPLINILSSKRDGAIANAATVLTNMAT), 429-468 (EPLRAIIQNHEIMHALLGPLHSTNTLVQSTAALTVAATAC), and 470-509 (VEARTQLRNCGGLVPLVGLLHSKNDEVRRHASWAVMVCAG). Residues Cys-507 and Cys-518 are each lipidated (S-palmitoyl cysteine). A disordered region spans residues 605 to 659 (NNKSDTSPPPSMEDKSSDVGYGRSISSSSSLRRGSKEKANAIFGSPTEEKSEPAS). Positions 622 to 636 (DVGYGRSISSSSSLR) are enriched in low complexity.

As to quaternary structure, homodimer. Interacts with PIK3C3, PIK3R4 and BECN1. Interacts (via ARM domains) with ATG14. In terms of processing, palmitoylation is important for its function in autophagy. In terms of tissue distribution, testis-specific.

In terms of biological role, essential for male fertility and sperm motility. During spermatogenesis, promotes the autophagic degradation of excessive ribosomes, providing energy resources for mitochondria and thus ensuring sperm flagellar motility. This is Armadillo repeat-containing protein 3 (Armc3) from Mus musculus (Mouse).